A 635-amino-acid chain; its full sequence is MAKKSAENGIYSVSGDEKKGPLIVSGPDGAPAKGDGPAGLGAPGGRLAVPPRETWTRQMDFIMSCVGFAVGLGNVWRFPYLCYKNGGGVFLIPYVLIALVGGIPIFFLEISLGQFMKAGSINVWNICPLFKGLGYASMVIVFYCNTYYIMVLAWGFYYLVKSFTTTLPWATCGHTWNTPDCVEIFRHEDCANASLANLTCDQLADRRSPVIEFWENKVLRLSTGLEVPGALNWEVTLCLLACWVLVYFCVWKGVKSTGKIVYFTATFPYVVLVVLLVRGVLLPGALDGIIYYLKPDWSKLGSPQVWIDAGTQIFFSYAIGLGALTALGSYNRFNNNCYKDAIILALINSGTSFFAGFVVFSILGFMATEQGVHISKVAESGPGLAFIAYPRAVTLMPVAPLWAALFFFMLLLLGLDSQFVGVEGFITGLLDLLPASYYFRFQREISVALCCALCFVIDLSMVTDGGMYVFQLFDYYSASGTTLLWQAFWECVVVAWVYGADRFMDDIACMIGYRPCPWMKWCWSFFTPLVCMGIFIFNIVYYEPLVYNNTYVYPWWGEAMGWAFALSSMLCVPLHLLGCLLRAKGTMAERWQHLTQPIWGLHHLEYRAQDADVRGLTTLTPVSESSKVVVVESVM.

Residues 1 to 27 (MAKKSAENGIYSVSGDEKKGPLIVSGP) form a disordered region. Over 1–60 (MAKKSAENGIYSVSGDEKKGPLIVSGPDGAPAKGDGPAGLGAPGGRLAVPPRETWTRQMD) the chain is Cytoplasmic. The helical transmembrane segment at 61–81 (FIMSCVGFAVGLGNVWRFPYL) threads the bilayer. Residues 82 to 87 (CYKNGG) are Extracellular-facing. The chain crosses the membrane as a helical span at residues 88 to 108 (GVFLIPYVLIALVGGIPIFFL). The Cytoplasmic portion of the chain corresponds to 109 to 138 (EISLGQFMKAGSINVWNICPLFKGLGYASM). A helical membrane pass occupies residues 139-159 (VIVFYCNTYYIMVLAWGFYYL). Topologically, residues 160–230 (VKSFTTTLPW…LSTGLEVPGA (71 aa)) are extracellular. N-linked (GlcNAc...) asparagine glycosylation is found at N192 and N197. A helical transmembrane segment spans residues 231-251 (LNWEVTLCLLACWVLVYFCVW). The Cytoplasmic segment spans residues 252–269 (KGVKSTGKIVYFTATFPY). A helical membrane pass occupies residues 270–290 (VVLVVLLVRGVLLPGALDGII). The Extracellular segment spans residues 291–304 (YYLKPDWSKLGSPQ). A helical membrane pass occupies residues 305-325 (VWIDAGTQIFFSYAIGLGALT). At 326-341 (ALGSYNRFNNNCYKDA) the chain is on the cytoplasmic side. Residues 342 to 362 (IILALINSGTSFFAGFVVFSI) form a helical membrane-spanning segment. Residues 363–394 (LGFMATEQGVHISKVAESGPGLAFIAYPRAVT) lie on the Extracellular side of the membrane. The helical transmembrane segment at 395–415 (LMPVAPLWAALFFFMLLLLGL) threads the bilayer. Residues 416-444 (DSQFVGVEGFITGLLDLLPASYYFRFQRE) lie on the Cytoplasmic side of the membrane. Residues 445 to 465 (ISVALCCALCFVIDLSMVTDG) traverse the membrane as a helical segment. Residues 466 to 479 (GMYVFQLFDYYSAS) lie on the Extracellular side of the membrane. A helical membrane pass occupies residues 480 to 500 (GTTLLWQAFWECVVVAWVYGA). Over 501 to 520 (DRFMDDIACMIGYRPCPWMK) the chain is Cytoplasmic. Residues 521 to 541 (WCWSFFTPLVCMGIFIFNIVY) form a helical membrane-spanning segment. Over 542–560 (YEPLVYNNTYVYPWWGEAM) the chain is Extracellular. N-linked (GlcNAc...) asparagine glycosylation occurs at N548. A helical membrane pass occupies residues 561 to 581 (GWAFALSSMLCVPLHLLGCLL). Topologically, residues 582-635 (RAKGTMAERWQHLTQPIWGLHHLEYRAQDADVRGLTTLTPVSESSKVVVVESVM) are cytoplasmic. A phosphothreonine mark is found at T617 and T620. Position 623 is a phosphoserine (S623).

It belongs to the sodium:neurotransmitter symporter (SNF) (TC 2.A.22) family. SLC6A8 subfamily. Glycosylated. Brain. Highly expressed in brain capillaries branching in all cortical layers and moderately expressed in neuronal perikarya (at protein level).

Its subcellular location is the cell membrane. It is found in the apical cell membrane. The enzyme catalyses creatine(out) + chloride(out) + 2 Na(+)(out) = creatine(in) + chloride(in) + 2 Na(+)(in). Creatine:sodium symporter which mediates the uptake of creatine. Plays an important role in supplying creatine to the brain via the blood-brain barrier. This is Sodium- and chloride-dependent creatine transporter 1 (Slc6a8) from Mus musculus (Mouse).